A 1199-amino-acid chain; its full sequence is Putative mitoferrin (1199 aa).

Residues 32–52 (VPLWQHIFCGSIAGLMEHVFM) traverse the membrane as a helical segment. Asn-92, Asn-171, Asn-208, Asn-268, Asn-326, Asn-353, Asn-443, Asn-499, Asn-539, Asn-649, Asn-708, Asn-715, and Asn-723 each carry an N-linked (GlcNAc...) asparagine glycan. A helical transmembrane segment spans residues 730-750 (GVNVVVLGCIPAHALYFSTFE). Asn-763 and Asn-772 each carry an N-linked (GlcNAc...) asparagine glycan. Residues 792 to 873 (LNYFSIAVSG…ICTNEKMKKI (82 aa)) form a Solcar 1 repeat. The next 2 membrane-spanning stretches (helical) occupy residues 795 to 815 (FSIA…ITPI) and 845 to 865 (LYLS…IMIC). 7 N-linked (GlcNAc...) asparagine glycosylation sites follow: Asn-914, Asn-922, Asn-965, Asn-1013, Asn-1022, Asn-1041, and Asn-1056. A Solcar 2 repeat occupies 1109–1191 (SYFVCAGIGG…WGTYETMKRF (83 aa)). A helical membrane pass occupies residues 1111 to 1131 (FVCAGIGGGIAAVLTNPLDVI).

This sequence belongs to the mitochondrial carrier (TC 2.A.29) family.

It is found in the mitochondrion membrane. Its function is as follows. Putative iron transporter. This is Putative mitoferrin from Plasmodium falciparum (isolate 3D7).